The following is a 226-amino-acid chain: ATP-dependent dethiobiotin synthetase BioD (226 aa).

12–17 (GVGKTV) lines the ATP pocket. Thr16 provides a ligand contact to Mg(2+). Residue Lys37 is part of the active site. Thr41 contributes to the substrate binding site. ATP is bound by residues Asp49, 108–111 (EGAG), and 197–199 (PAG). Residues Asp49 and Glu108 each contribute to the Mg(2+) site.

Belongs to the dethiobiotin synthetase family. As to quaternary structure, homodimer. Mg(2+) serves as cofactor.

It is found in the cytoplasm. It carries out the reaction (7R,8S)-7,8-diammoniononanoate + CO2 + ATP = (4R,5S)-dethiobiotin + ADP + phosphate + 3 H(+). It functions in the pathway cofactor biosynthesis; biotin biosynthesis; biotin from 7,8-diaminononanoate: step 1/2. Catalyzes a mechanistically unusual reaction, the ATP-dependent insertion of CO2 between the N7 and N8 nitrogen atoms of 7,8-diaminopelargonic acid (DAPA, also called 7,8-diammoniononanoate) to form a ureido ring. The polypeptide is ATP-dependent dethiobiotin synthetase BioD (Mycobacterium avium (strain 104)).